We begin with the raw amino-acid sequence, 302 residues long: Methionyl-tRNA formyltransferase (302 aa).

108–111 (SILP) provides a ligand contact to (6S)-5,6,7,8-tetrahydrofolate.

The protein belongs to the Fmt family.

It catalyses the reaction L-methionyl-tRNA(fMet) + (6R)-10-formyltetrahydrofolate = N-formyl-L-methionyl-tRNA(fMet) + (6S)-5,6,7,8-tetrahydrofolate + H(+). Functionally, attaches a formyl group to the free amino group of methionyl-tRNA(fMet). The formyl group appears to play a dual role in the initiator identity of N-formylmethionyl-tRNA by promoting its recognition by IF2 and preventing the misappropriation of this tRNA by the elongation apparatus. In Sulfurimonas denitrificans (strain ATCC 33889 / DSM 1251) (Thiomicrospira denitrificans (strain ATCC 33889 / DSM 1251)), this protein is Methionyl-tRNA formyltransferase.